We begin with the raw amino-acid sequence, 365 residues long: Phosphoserine aminotransferase (365 aa).

Arg-40 provides a ligand contact to L-glutamate. Pyridoxal 5'-phosphate contacts are provided by residues 74–75 (AS), Phe-99, Thr-155, Asp-177, and Gln-200. Position 201 is an N6-(pyridoxal phosphate)lysine (Lys-201). Position 241–242 (241–242 (NT)) interacts with pyridoxal 5'-phosphate.

It belongs to the class-V pyridoxal-phosphate-dependent aminotransferase family. SerC subfamily. As to quaternary structure, homodimer. Requires pyridoxal 5'-phosphate as cofactor.

It localises to the cytoplasm. The enzyme catalyses O-phospho-L-serine + 2-oxoglutarate = 3-phosphooxypyruvate + L-glutamate. It catalyses the reaction 4-(phosphooxy)-L-threonine + 2-oxoglutarate = (R)-3-hydroxy-2-oxo-4-phosphooxybutanoate + L-glutamate. It functions in the pathway amino-acid biosynthesis; L-serine biosynthesis; L-serine from 3-phospho-D-glycerate: step 2/3. Functionally, catalyzes the reversible conversion of 3-phosphohydroxypyruvate to phosphoserine and of 3-hydroxy-2-oxo-4-phosphonooxybutanoate to phosphohydroxythreonine. The protein is Phosphoserine aminotransferase of Lactococcus lactis subsp. lactis (strain IL1403) (Streptococcus lactis).